The following is a 177-amino-acid chain: Novel acetylcholine receptor chaperone (177 aa).

The Cytoplasmic segment spans residues 1-5 (MASPR). Residues 6–26 (TVTVVALSVALGLFFVFMGTI) traverse the membrane as a helical segment. Residues 27–61 (KLTPRLSKDAYSEMKRAYKSYVRALPLLKKMGINS) lie on the Lumenal side of the membrane. Positions 43-54 (AYKSYVRALPLL) are interaction with NGFR. The chain crosses the membrane as a helical span at residues 62–82 (ILLRKSIGALEVACGIVMTLV). Topologically, residues 83–88 (PGRPKD) are cytoplasmic. The chain crosses the membrane as a helical span at residues 89 to 109 (VANFFLLLLVLAVLFFHQLVG). Topologically, residues 110–114 (DPLKR) are lumenal. The chain crosses the membrane as a helical span at residues 115 to 132 (YAHALVFGILLTCRLLIA). Over 133-177 (RKPEDRSSEKKSSPPGNAGSDGNAGNTEEQPSLYEKAPQGKMKLS) the chain is Cytoplasmic. Residues 136-177 (EDRSSEKKSSPPGNAGSDGNAGNTEEQPSLYEKAPQGKMKLS) form a disordered region.

The protein belongs to the DoxX family. May interact with NGFR. Interacts with RPN1, RPN2 and CANX.

It is found in the peroxisome membrane. It localises to the cytoplasmic vesicle. Its subcellular location is the endoplasmic reticulum membrane. Molecular chaperone which mediates the proper assembly and functional expression of the nicotinic acetylcholine receptors (nAChRs) throughout the brain. Essential for the proper folding, assembly, function and surface trafficking of alpha-7 (CHRNA7), alpha-4-beta-2, alpha-3-beta-2 and alpha-3-beta-4 receptors. Stably associates with ribophorin-1 (RPN1) and ribophorin-2 (RPN2) (components of the oligosaccharyl transferase (OST) complex) and with calnexin (CANX), both of which are critical for NACHO-mediated effects on CHRNA7 assembly and function. Facilitates the proper folding and assembly of alpha-6-beta-2 and alpha-6-beta-2-beta-3 receptors and acts at early stages of the nAChRs subunit assembly. Promotes the expression of the alpha-4(2):beta-2(3) stoichiometric form over the alpha-4(3):beta-2(2) form. The polypeptide is Novel acetylcholine receptor chaperone (TMEM35A) (Bos taurus (Bovine)).